The sequence spans 228 residues: uncharacterized protein (228 aa).

In terms of domain architecture, Response regulatory spans 5–119; the sequence is HILIVEDEEK…ELLARIRAAL (115 aa). At aspartate 54 the chain carries 4-aspartylphosphate. Residues 130 to 228 constitute a DNA-binding region (ompR/PhoB-type); it reads GTFLTYDDLR…IRGVGYAIKG (99 aa).

In terms of processing, phosphorylated by YkoH.

It localises to the cytoplasm. Probable member of the two-component regulatory system YkoH/YkoG. This is an uncharacterized protein from Bacillus subtilis (strain 168).